A 197-amino-acid chain; its full sequence is Probable adenylyl-sulfate kinase (197 aa).

33–40 lines the ATP pocket; sequence GLSGSGKS. Ser107 functions as the Phosphoserine intermediate in the catalytic mechanism.

The protein belongs to the APS kinase family.

The catalysed reaction is adenosine 5'-phosphosulfate + ATP = 3'-phosphoadenylyl sulfate + ADP + H(+). The protein operates within sulfur metabolism; hydrogen sulfide biosynthesis; sulfite from sulfate: step 2/3. Catalyzes the synthesis of activated sulfate. This Bacillus subtilis (strain 168) protein is Probable adenylyl-sulfate kinase (cysC).